Reading from the N-terminus, the 375-residue chain is Trichodiene synthase (375 aa).

This sequence belongs to the trichodiene synthase family.

The enzyme catalyses (2E,6E)-farnesyl diphosphate = trichodiene + diphosphate. The protein operates within sesquiterpene biosynthesis; trichothecene biosynthesis. In terms of biological role, TS is a member of the terpene cyclase group of enzymes. It catalyzes the isomerization and cyclization of farnesyl pyro-phosphate to form trichodiene, the first cyclic intermediate in the biosynthetic pathway for trichothecenes. It serves to branch trichothecene biosynthesis from the isoprenoid pathway. The polypeptide is Trichodiene synthase (TRI5) (Fusarium austroamericanum).